The chain runs to 1380 residues: Inverted formin-2 (1380 aa).

Positions 1–330 (MSLKEGAHTK…RAVLLADDCQ (330 aa)) constitute a GBD/FH3 domain. Disordered regions lie at residues 341 to 391 (LVTS…SGIP) and 440 to 541 (ISTS…PPPL). Over residues 343–352 (TSKKHPSKEK) the composition is skewed to basic residues. The segment covering 367 to 385 (QTDKPKDESCEEKTVKKDP) has biased composition (basic and acidic residues). Residues 432 to 592 (VVSNAIDRIS…DYSLGYLPKA (161 aa)) form the FH1 domain. Composition is skewed to pro residues over residues 446–470 (LPPP…PPLP) and 478–541 (TPPP…PPPL). The region spanning 593–981 (YFKVNKPTLK…AEKRKKQLAD (389 aa)) is the FH2 domain. Coiled coils occupy residues 879–930 (LKKL…KLAD) and 956–991 (LKAK…KGEN). Residues 1009-1024 (DALLADIKKGFQLRKT) form the WH2 domain. 3 disordered regions span residues 1026 to 1049 (KTKT…DGTD), 1188 to 1244 (HKER…LSEA), and 1260 to 1380 (FQSS…CVVQ). Polar residues-rich tracts occupy residues 1206–1244 (GTES…LSEA), 1260–1284 (FQSS…QAQR), and 1294–1303 (TRDTTVTEGS). The span at 1306 to 1322 (EEDKCNDEGYPEHKTMG) shows a compositional bias: basic and acidic residues. Low complexity predominate over residues 1328–1339 (SSSHSTTLQQSS). The segment covering 1345–1359 (VKRGSSKHKKKRRSS) has biased composition (basic residues).

This sequence belongs to the formin homology family.

The chain is Inverted formin-2 (inf2) from Xenopus tropicalis (Western clawed frog).